A 366-amino-acid chain; its full sequence is Aminomethyltransferase (366 aa).

It belongs to the GcvT family. The glycine cleavage system is composed of four proteins: P, T, L and H.

The catalysed reaction is N(6)-[(R)-S(8)-aminomethyldihydrolipoyl]-L-lysyl-[protein] + (6S)-5,6,7,8-tetrahydrofolate = N(6)-[(R)-dihydrolipoyl]-L-lysyl-[protein] + (6R)-5,10-methylene-5,6,7,8-tetrahydrofolate + NH4(+). The glycine cleavage system catalyzes the degradation of glycine. The chain is Aminomethyltransferase from Bacillus cereus (strain B4264).